Consider the following 90-residue polypeptide: DNA-binding protein HU-alpha (90 aa).

Belongs to the bacterial histone-like protein family. In terms of assembly, heterodimer of an alpha and a beta chain.

Functionally, histone-like DNA-binding protein which is capable of wrapping DNA to stabilize it, and thus to prevent its denaturation under extreme environmental conditions. The polypeptide is DNA-binding protein HU-alpha (hupA) (Salmonella typhi).